We begin with the raw amino-acid sequence, 636 residues long: Nuclear receptor subfamily 2 group C member 1 (636 aa).

The segment at residues 149–224 (VELCVVCGDK…LGMKQDSVQC (76 aa)) is a DNA-binding region (nuclear receptor). 2 NR C4-type zinc fingers span residues 152–172 (CVVC…CEGC) and 188–207 (CRGS…CQYC). Positions 382-623 (ECVGSNSNLT…SIIPYILRME (242 aa)) constitute an NR LBD domain.

This sequence belongs to the nuclear hormone receptor family. NR2 subfamily.

It is found in the nucleus. In terms of biological role, orphan nuclear receptor. Binds the IR7 element in the promoter of its own gene in an autoregulatory negative feedback mechanism. Primarily repressor of a broad range of genes. Binds to hormone response elements (HREs) consisting of two 5'-AGGTCA-3' half site direct repeat consensus sequences. The sequence is that of Nuclear receptor subfamily 2 group C member 1 from Xenopus tropicalis (Western clawed frog).